The sequence spans 224 residues: Response regulator protein GraR (224 aa).

Positions 2 to 115 (DILLVEDDMT…VLIAKLQAIY (114 aa)) constitute a Response regulatory domain. Asp51 carries the post-translational modification 4-aspartylphosphate. The segment at residues 126 to 224 (KRVLSWQDAI…KIGKGYMAHG (99 aa)) is a DNA-binding region (ompR/PhoB-type).

In terms of processing, phosphorylated by GraS.

The protein localises to the cytoplasm. Member of the two-component regulatory system GraR/GraS involved in resistance against cationic antimicrobial peptides (CAMPs). In Staphylococcus saprophyticus subsp. saprophyticus (strain ATCC 15305 / DSM 20229 / NCIMB 8711 / NCTC 7292 / S-41), this protein is Response regulator protein GraR (graR).